The following is a 91-amino-acid chain: Sec-independent protein translocase protein TatA (91 aa).

The helical transmembrane segment at 1–21 threads the bilayer; the sequence is MGIFDWKHWIVILIVVVLVFG. The disordered stretch occupies residues 42–91; it reads AMNDDDKPAEQPAPQPQQAQAAPQGSPLNQPHTIDAQAHKVDEPIRKDQV. Positions 51 to 65 are enriched in low complexity; that stretch reads EQPAPQPQQAQAAPQ. The span at 78-91 shows a compositional bias: basic and acidic residues; that stretch reads QAHKVDEPIRKDQV.

The protein belongs to the TatA/E family. As to quaternary structure, the Tat system comprises two distinct complexes: a TatABC complex, containing multiple copies of TatA, TatB and TatC subunits, and a separate TatA complex, containing only TatA subunits. Substrates initially bind to the TatABC complex, which probably triggers association of the separate TatA complex to form the active translocon.

Its subcellular location is the cell inner membrane. Functionally, part of the twin-arginine translocation (Tat) system that transports large folded proteins containing a characteristic twin-arginine motif in their signal peptide across membranes. TatA could form the protein-conducting channel of the Tat system. In Pseudomonas savastanoi pv. phaseolicola (strain 1448A / Race 6) (Pseudomonas syringae pv. phaseolicola (strain 1448A / Race 6)), this protein is Sec-independent protein translocase protein TatA.